The primary structure comprises 505 residues: Phosphoglycerate kinase, glycosomal (505 aa).

(2R)-3-phosphoglycerate contacts are provided by V29, D30, F31, N32, R45, S67, H68, G70, R71, L219, R220, H256, and R257. G302 and A303 together coordinate ADP. Residue G302 coordinates CDP. AMP contacts are provided by A303 and K304. A303 contacts ATP. Residue A303 participates in Mg(2+) binding. K304 is a (2R)-3-phosphoglycerate binding site. D307 is a CDP binding site. D307 is a Mg(2+) binding site. ADP contacts are provided by K308 and G326. K308 is a binding site for AMP. K308 serves as a coordination point for ATP. G326 is a binding site for CDP. 2 residues coordinate AMP: G327 and G399. 2 residues coordinate ATP: G327 and G399. 2 residues coordinate ADP: G399 and N423. Positions 424, 426, and 429 each coordinate CDP. ADP-binding residues include F429, E430, D462, and T463. E430 is a binding site for AMP. Residues E430, D462, and T463 each contribute to the ATP site. D462 lines the Mg(2+) pocket.

This sequence belongs to the phosphoglycerate kinase family. Monomer. It depends on Mg(2+) as a cofactor.

The protein resides in the glycosome. It carries out the reaction (2R)-3-phosphoglycerate + ATP = (2R)-3-phospho-glyceroyl phosphate + ADP. Its pathway is carbohydrate degradation; glycolysis; pyruvate from D-glyceraldehyde 3-phosphate: step 2/5. In Crithidia fasciculata, this protein is Phosphoglycerate kinase, glycosomal (PGKA).